Here is a 137-residue protein sequence, read N- to C-terminus: ATP synthase epsilon chain 1 (137 aa).

Belongs to the ATPase epsilon chain family. In terms of assembly, F-type ATPases have 2 components, CF(1) - the catalytic core - and CF(0) - the membrane proton channel. CF(1) has five subunits: alpha(3), beta(3), gamma(1), delta(1), epsilon(1). CF(0) has three main subunits: a, b and c.

The protein localises to the cell inner membrane. Its function is as follows. Produces ATP from ADP in the presence of a proton gradient across the membrane. This chain is ATP synthase epsilon chain 1 (atpC1), found in Ralstonia nicotianae (strain ATCC BAA-1114 / GMI1000) (Ralstonia solanacearum).